Reading from the N-terminus, the 83-residue chain is Cytochrome c oxidase subunit 7A2, mitochondrial (83 aa).

Residues 1-23 constitute a mitochondrion transit peptide; sequence MLRNVLALRQIAQRTISTTSRRH. The Mitochondrial matrix portion of the chain corresponds to 24 to 48; that stretch reads FENKVPEKQKLFQEDNGMPVHLKGG. Lys33 is modified (N6-acetyllysine). Residues 49-77 form a helical membrane-spanning segment; that stretch reads TSDALLYRATMLLTVGGTAYAIYMLAMAA. The Mitochondrial intermembrane segment spans residues 78 to 83; the sequence is FPKKQN.

Belongs to the cytochrome c oxidase VIIa family. In terms of assembly, component of the cytochrome c oxidase (complex IV, CIV), a multisubunit enzyme composed of 14 subunits. The complex is composed of a catalytic core of 3 subunits MT-CO1, MT-CO2 and MT-CO3, encoded in the mitochondrial DNA, and 11 supernumerary subunits COX4I, COX5A, COX5B, COX6A, COX6B, COX6C, COX7A, COX7B, COX7C, COX8 and NDUFA4, which are encoded in the nuclear genome. The complex exists as a monomer or a dimer and forms supercomplexes (SCs) in the inner mitochondrial membrane with NADH-ubiquinone oxidoreductase (complex I, CI) and ubiquinol-cytochrome c oxidoreductase (cytochrome b-c1 complex, complex III, CIII), resulting in different assemblies (supercomplex SCI(1)III(2)IV(1) and megacomplex MCI(2)III(2)IV(2)). Interacts with PET100.

It localises to the mitochondrion inner membrane. The protein operates within energy metabolism; oxidative phosphorylation. Functionally, component of the cytochrome c oxidase, the last enzyme in the mitochondrial electron transport chain which drives oxidative phosphorylation. The respiratory chain contains 3 multisubunit complexes succinate dehydrogenase (complex II, CII), ubiquinol-cytochrome c oxidoreductase (cytochrome b-c1 complex, complex III, CIII) and cytochrome c oxidase (complex IV, CIV), that cooperate to transfer electrons derived from NADH and succinate to molecular oxygen, creating an electrochemical gradient over the inner membrane that drives transmembrane transport and the ATP synthase. Cytochrome c oxidase is the component of the respiratory chain that catalyzes the reduction of oxygen to water. Electrons originating from reduced cytochrome c in the intermembrane space (IMS) are transferred via the dinuclear copper A center (CU(A)) of subunit 2 and heme A of subunit 1 to the active site in subunit 1, a binuclear center (BNC) formed by heme A3 and copper B (CU(B)). The BNC reduces molecular oxygen to 2 water molecules using 4 electrons from cytochrome c in the IMS and 4 protons from the mitochondrial matrix. In Rattus norvegicus (Rat), this protein is Cytochrome c oxidase subunit 7A2, mitochondrial (Cox7a2).